Here is a 115-residue protein sequence, read N- to C-terminus: Large ribosomal subunit protein bL20 (115 aa).

This sequence belongs to the bacterial ribosomal protein bL20 family.

Functionally, binds directly to 23S ribosomal RNA and is necessary for the in vitro assembly process of the 50S ribosomal subunit. It is not involved in the protein synthesizing functions of that subunit. The polypeptide is Large ribosomal subunit protein bL20 (Myxococcus xanthus (strain DK1622)).